A 243-amino-acid chain; its full sequence is ATP synthase subunit a (243 aa).

8 consecutive transmembrane segments (helical) span residues Asn-29–Leu-49, Val-54–Ile-74, Val-89–Phe-109, His-114–Phe-134, Phe-141–Ile-161, Leu-177–Asn-197, Ile-200–Val-220, and Ala-221–Asn-241.

It belongs to the ATPase A chain family. F-type ATPases have 2 components, CF(1) - the catalytic core - and CF(0) - the membrane proton channel. CF(1) has five subunits: alpha(3), beta(3), gamma(1), delta(1), epsilon(1). CF(0) has three main subunits: a(1), b(2) and c(9-12). The alpha and beta chains form an alternating ring which encloses part of the gamma chain. CF(1) is attached to CF(0) by a central stalk formed by the gamma and epsilon chains, while a peripheral stalk is formed by the delta and b chains.

It is found in the cell inner membrane. Its function is as follows. Key component of the proton channel; it plays a direct role in the translocation of protons across the membrane. The chain is ATP synthase subunit a from Ehrlichia ruminantium (strain Welgevonden).